The following is a 271-amino-acid chain: Tritrans,polycis-undecaprenyl-diphosphate synthase (geranylgeranyl-diphosphate specific) (271 aa).

D50 is a catalytic residue. D50 provides a ligand contact to Mg(2+). Substrate contacts are provided by residues G51 to R54, F55, H67, and S95 to E97. The active-site Proton acceptor is the N98. Substrate-binding positions include R101, R220, and R226–S228. E239 is a Mg(2+) binding site.

The protein belongs to the UPP synthase family. Homodimer. It depends on Mg(2+) as a cofactor.

The enzyme catalyses geranylgeranyl diphosphate + 7 isopentenyl diphosphate = tri-trans,hepta-cis-undecaprenyl diphosphate + 7 diphosphate. In terms of biological role, catalyzes the sequential condensation of isopentenyl diphosphate (IPP) with geranylgeranyl diphosphate (GGPP) to yield (2Z,6Z,10Z,14Z,18Z,22Z,26Z,30E,34E,38E)-undecaprenyl diphosphate (tritrans,heptacis-UPP). It is probably the precursor of glycosyl carrier lipids. In Methanopyrus kandleri (strain AV19 / DSM 6324 / JCM 9639 / NBRC 100938), this protein is Tritrans,polycis-undecaprenyl-diphosphate synthase (geranylgeranyl-diphosphate specific).